A 456-amino-acid chain; its full sequence is Tyrosinase-like protein (456 aa).

Positions 1-22 are cleaved as a signal peptide; that stretch reads MNTMTLLGKVFLLQFLIGVGFC. 6 residues coordinate Cu cation: histidine 145, histidine 154, histidine 163, histidine 295, histidine 299, and histidine 322.

Belongs to the tyrosinase family. The cofactor is Cu(2+). Prismatic layer of shell (at protein level).

The protein localises to the secreted. The sequence is that of Tyrosinase-like protein from Pinctada maxima (Silver-lipped pearl oyster).